A 663-amino-acid polypeptide reads, in one-letter code: DNA ligase (663 aa).

NAD(+) contacts are provided by residues 31–35 (DYEYD), 80–81 (SL), and E109. K111 acts as the N6-AMP-lysine intermediate in catalysis. NAD(+)-binding residues include R132, E167, K283, and K307. 4 residues coordinate Zn(2+): C401, C404, C419, and C424. A BRCT domain is found at 586–663 (KIDNRFLGKT…TEEDLKDMIK (78 aa)).

This sequence belongs to the NAD-dependent DNA ligase family. LigA subfamily. Mg(2+) is required as a cofactor. Requires Mn(2+) as cofactor.

It carries out the reaction NAD(+) + (deoxyribonucleotide)n-3'-hydroxyl + 5'-phospho-(deoxyribonucleotide)m = (deoxyribonucleotide)n+m + AMP + beta-nicotinamide D-nucleotide.. Functionally, DNA ligase that catalyzes the formation of phosphodiester linkages between 5'-phosphoryl and 3'-hydroxyl groups in double-stranded DNA using NAD as a coenzyme and as the energy source for the reaction. It is essential for DNA replication and repair of damaged DNA. The polypeptide is DNA ligase (Clostridium kluyveri (strain NBRC 12016)).